A 46-amino-acid polypeptide reads, in one-letter code: GIFSKFGRKKIKNLLISGLKNVGKEVGMDVVRTGIDIAGCKIKGEC.

Cys40 and Cys46 are oxidised to a cystine.

In terms of tissue distribution, expressed by the skin glands.

The protein localises to the secreted. In terms of biological role, antimicrobial peptide. Stimulates insulin release by BRIN-BD11 cells in vitro. The protein is Esculentin-1 of Pelophylax saharicus (Sahara frog).